Reading from the N-terminus, the 196-residue chain is ATP-dependent Clp protease proteolytic subunit (196 aa).

The Nucleophile role is filled by S99. The active site involves H124.

This sequence belongs to the peptidase S14 family. As to quaternary structure, fourteen ClpP subunits assemble into 2 heptameric rings which stack back to back to give a disk-like structure with a central cavity, resembling the structure of eukaryotic proteasomes.

The protein localises to the cytoplasm. It catalyses the reaction Hydrolysis of proteins to small peptides in the presence of ATP and magnesium. alpha-casein is the usual test substrate. In the absence of ATP, only oligopeptides shorter than five residues are hydrolyzed (such as succinyl-Leu-Tyr-|-NHMec, and Leu-Tyr-Leu-|-Tyr-Trp, in which cleavage of the -Tyr-|-Leu- and -Tyr-|-Trp bonds also occurs).. In terms of biological role, cleaves peptides in various proteins in a process that requires ATP hydrolysis. Has a chymotrypsin-like activity. Plays a major role in the degradation of misfolded proteins. The protein is ATP-dependent Clp protease proteolytic subunit of Nitratiruptor sp. (strain SB155-2).